Here is a 327-residue protein sequence, read N- to C-terminus: 2-oxoglutarate-dependent dioxygenase traH (327 aa).

A Fe2OG dioxygenase domain is found at T183–D290. Residues H211, D213, and H270 each coordinate Fe cation. R280 contributes to the 2-oxoglutarate binding site.

This sequence belongs to the iron/ascorbate-dependent oxidoreductase family. Requires Fe(2+) as cofactor.

Its pathway is secondary metabolite biosynthesis. Functionally, 2-oxoglutarate-dependent dioxygenase; part of the tra gene cluster that produces terrestric acid. The clavatol biosynthesis cluster cla and the terrestric acid cluster tra are both involved in the production of peniphenones and penilactones. The non-reducing PKS claF is responsible for the formation of clavatol from successive condensations of 3 malonyl-CoA units, presumably with a simple acetyl-CoA starter unit, and 2 methylation steps. The esterase claE probably collaborates with claF by catalyzing the hydrolysis of ACP-bound acyl intermediates to free the ACP from stalled intermediates. The clavatol oxidase claD then converts clavatol to hydroxyclavatol. Spontaneous dehydration of hydroxyclavatol leads to the accumulation of the highly active ortho-quinone methide. On the other hand, the PKS-NRPS hybrid traA is involved in the formation of crustosic acid, with the help of traB and traD. The polyketide synthase module (PKS) of traA is responsible for the synthesis of the polyketide backbone via the condensation of an acetyl-CoA starter unit with 3 malonyl-CoA units. The downstream nonribosomal peptide synthetase (NRPS) module then amidates the carboxyl end of the polyketide with L-malic acid. Because traA lacks a designated enoylreductase (ER) domain, the required activity is provided the enoyl reductase traG. Crustosic acid undergoes decarboxylation and isomerization to the terrestric acid, catalyzed by the 2-oxoglutarate-dependent dioxygenase traH. Both acids are further converted to the 2 gamma-butyrolactones (R)-5-methyltetronic acid and (S)-5-carboxylmethyltetronic acid, with involvement of the cytochrome P450 monooxygenase claJ. Spontaneous addition of the methide to these gamma-butyrolactones leads to peniphenone D and penilactone D, which undergo again stereospecific attacking by methide to give penilactones A and B. The sequence is that of 2-oxoglutarate-dependent dioxygenase traH from Penicillium crustosum (Blue mold fungus).